A 155-amino-acid polypeptide reads, in one-letter code: MSPTRIYVDADACPVKDEIYKVAARHGLPVSVVAGNFIRVPADPSIERIAAGPGMDAADDWIAERAGPGDIVVTSDVPLASRCVKRGAEVLAPNGKPFSEASIGMTLAVRNLMTDLRSAGEVTGGPRGFSPRDRSAFLSALDTAIRRIQRSNKTA.

It belongs to the UPF0178 family.

In Rhodopseudomonas palustris (strain BisB18), this protein is UPF0178 protein RPC_3085.